Here is a 214-residue protein sequence, read N- to C-terminus: MRCKMKFIVFEGLDGSGKSSLMAALERELQNRAINFLRTREPGGTPLGDEIRNMILRKEGPAPTPRTELLLYEASRSQHVDQVIRPALAAGTWVLCDRFAASSVAFQSGGRAISEADVVMLNTFATGGLKADITVLLDLSVEESRRRRQGRGAVTGETEDRIESEADTFHENVRQSFLKQSREDAAAWIVLDARETPEVLFKQLLQSLTERKVL.

Residue 12-19 participates in ATP binding; the sequence is GLDGSGKS.

Belongs to the thymidylate kinase family.

It catalyses the reaction dTMP + ATP = dTDP + ADP. Phosphorylation of dTMP to form dTDP in both de novo and salvage pathways of dTTP synthesis. This Bdellovibrio bacteriovorus (strain ATCC 15356 / DSM 50701 / NCIMB 9529 / HD100) protein is Thymidylate kinase.